Here is a 175-residue protein sequence, read N- to C-terminus: Small ribosomal subunit protein uS5 (175 aa).

The S5 DRBM domain maps to 19-82 (WQERVIQIRR…ADGKKHLIDI (64 aa)).

Belongs to the universal ribosomal protein uS5 family. Part of the 30S ribosomal subunit. Contacts proteins S4 and S8.

With S4 and S12 plays an important role in translational accuracy. Functionally, located at the back of the 30S subunit body where it stabilizes the conformation of the head with respect to the body. In Nostoc punctiforme (strain ATCC 29133 / PCC 73102), this protein is Small ribosomal subunit protein uS5.